Here is a 290-residue protein sequence, read N- to C-terminus: Transposon Ty3-I Gag polyprotein (290 aa).

Ser2 is subject to N-acetylserine. The CCHC-type zinc-finger motif lies at 265–282 (RLCFYCKKEGHRLNECRA).

The protein resides in the cytoplasm. Functionally, capsid protein (CA) is the structural component of the virus-like particle (VLP), forming the shell that encapsulates the retrotransposons dimeric RNA genome. In terms of biological role, nucleocapsid protein p9 (NC) forms the nucleocore that coats the retro-elements dimeric RNA. Binds these RNAs through its zinc fingers. Promotes primer tRNA(i)-Met annealing to the multipartite primer-binding site (PBS), dimerization of Ty3 RNA and initiation of reverse transcription. The chain is Transposon Ty3-I Gag polyprotein (TY3A-I) from Saccharomyces cerevisiae (strain ATCC 204508 / S288c) (Baker's yeast).